The sequence spans 130 residues: uncharacterized protein (130 aa).

Positions 1–18 (MVEVWWSLIGAAVPALIA) are cleaved as a signal peptide.

This is an uncharacterized protein from Arabidopsis thaliana (Mouse-ear cress).